Here is a 529-residue protein sequence, read N- to C-terminus: UDP-glucuronosyltransferase 2B28 (529 aa).

A signal peptide spans 1 to 24; that stretch reads MALKWTSVLLLIHLGCYFSSGSCG. Lysine 135 carries the N6-succinyllysine modification. Asparagine 315 carries an N-linked (GlcNAc...) asparagine glycan. Residues 495-517 form a helical membrane-spanning segment; the sequence is GFLLACVATVIFVVTKFCLFCFW.

This sequence belongs to the UDP-glycosyltransferase family. Expressed in the liver, breast and kidney.

It is found in the endoplasmic reticulum membrane. It localises to the cytoplasm. Its subcellular location is the perinuclear region. The catalysed reaction is glucuronate acceptor + UDP-alpha-D-glucuronate = acceptor beta-D-glucuronoside + UDP + H(+). In terms of biological role, UDP-glucuronosyltransferase (UGT) that catalyzes phase II biotransformation reactions in which lipophilic substrates are conjugated with glucuronic acid to increase the metabolite's water solubility, thereby facilitating excretion into either the urine or bile. Essential for the elimination and detoxification of drugs, xenobiotics and endogenous compounds. Catalyzes the glucuronidation of endogenous steroid hormones such as androgens (androsterone, 3alpha-androstanediol) and estrogens (estradiol, estrone). Catalyzes the glucuronidation of bile acid substrates, which are natural detergents for dietary lipids absorption. Displays glucuronidation activity toward the phenolic compounds eugenol. Lack UDP-glucuronosyltransferase (UGT) activity. This Homo sapiens (Human) protein is UDP-glucuronosyltransferase 2B28.